We begin with the raw amino-acid sequence, 357 residues long: Guanine nucleotide-binding protein alpha-16 subunit (357 aa).

G2 is lipidated: N-myristoyl glycine. C3 carries S-palmitoyl cysteine lipidation. Residues 32-357 (RTIKLLLLGA…RDNLRTCGLY (326 aa)) enclose the G-alpha domain. The interval 35–48 (KLLLLGAGESGKST) is G1 motif. Residues 40-47 (GAGESGKS), 175-181 (LRTRIKT), 200-204 (DVGGQ), 269-272 (NKKD), and A329 each bind GTP. Mg(2+) is bound by residues S47 and T181. The G2 motif stretch occupies residues 173-181 (DILRTRIKT). Residues 196-205 (FLVFDVGGQR) are G3 motif. Residues 265-272 (ILFLNKKD) form a G4 motif region. A G5 motif region spans residues 327-332 (TCATDT).

The protein belongs to the G-alpha family. In terms of assembly, g proteins are composed of 3 units; alpha, beta and gamma. The alpha chain contains the guanine nucleotide binding site.

Its function is as follows. Guanine nucleotide-binding proteins (G proteins) are involved as modulators or transducers in various transmembrane signaling systems. In the 1-cell embryo, probably together with goa-1, controls nuclear rotation and spindle elongation during mitosis. During the first embryonic cell divisons, plays a role in gpr-1/2 cortical localization and in the proper orientation of EMS blastomere mitotic spindle. The chain is Guanine nucleotide-binding protein alpha-16 subunit (gpa-16) from Caenorhabditis elegans.